A 432-amino-acid chain; its full sequence is Delta-aminolevulinic acid dehydratase, chloroplastic (432 aa).

The segment at 84–113 is disordered; it reads AAPPVPAKPSAPEGTPAISPLVMPARPRRN. The active-site Schiff-base intermediate with substrate is the Lys-300. 2 residues coordinate 5-aminolevulinate: Arg-310 and Lys-322. Glu-338 provides a ligand contact to Mg(2+). The active-site Schiff-base intermediate with substrate is Lys-353. 5-aminolevulinate contacts are provided by Ser-379 and Tyr-418.

Belongs to the ALAD family. Homooctamer. Mg(2+) serves as cofactor.

The protein resides in the plastid. Its subcellular location is the chloroplast. It catalyses the reaction 2 5-aminolevulinate = porphobilinogen + 2 H2O + H(+). The protein operates within porphyrin-containing compound metabolism; protoporphyrin-IX biosynthesis; coproporphyrinogen-III from 5-aminolevulinate: step 1/4. Its function is as follows. Catalyzes an early step in the biosynthesis of tetrapyrroles. Binds two molecules of 5-aminolevulinate per subunit, each at a distinct site, and catalyzes their condensation to form porphobilinogen. This chain is Delta-aminolevulinic acid dehydratase, chloroplastic (HEMB), found in Physcomitrium patens (Spreading-leaved earth moss).